The following is a 1191-amino-acid chain: Putative glycoside hydrolase 22789 (1191 aa).

Low complexity predominate over residues 173–187 (PSSSGASSVLPSPSA). The interval 173–221 (PSSSGASSVLPSPSAHTPDAATDANHLPNPDPASGRQELTRAGRPARKK) is disordered.

It belongs to the glycoside hydrolase-like 3 (GHL3) family.

This Monosiga brevicollis (Choanoflagellate) protein is Putative glycoside hydrolase 22789.